Reading from the N-terminus, the 171-residue chain is CS1 fimbrial subunit A (171 aa).

Residues 1–23 form the signal peptide; the sequence is MKLKKTIGAMALATLFATMGASA.

Belongs to the fimbrial CS1 protein family.

It localises to the fimbrium. Its function is as follows. Fimbriae (also called pili), polar filaments radiating from the surface of the bacterium to a length of 0.5-1.5 micrometers and numbering 100-300 per cell, enable bacteria to colonize the epithelium of specific host organs. This Escherichia coli protein is CS1 fimbrial subunit A (csoA).